A 214-amino-acid polypeptide reads, in one-letter code: Ribonuclease S-2 (214 aa).

Positions 1-22 (MSKSQLTSVFFILLCALSPIYG) are cleaved as a signal peptide. Cysteine 38 and cysteine 43 are joined by a disulfide. Residue asparagine 49 is glycosylated (N-linked (GlcNAc...) asparagine). Histidine 53 functions as the Proton donor in the catalytic mechanism. Histidine 53 provides a ligand contact to RNA. An N-linked (GlcNAc...) asparagine glycan is attached at asparagine 59. A disulfide bridge connects residues cysteine 67 and cysteine 116. RNA contacts are provided by residues 91–92 (DL), lysine 94, and phenylalanine 105. Residue glutamate 109 is part of the active site. 112–113 (KH) lines the RNA pocket. The active-site Proton acceptor is histidine 113. Residue asparagine 160 is glycosylated (N-linked (GlcNAc...) asparagine). Disulfide bonds link cysteine 175–cysteine 204 and cysteine 187–cysteine 198.

It belongs to the RNase T2 family.

The protein localises to the secreted. It localises to the extracellular space. The enzyme catalyses a ribonucleotidyl-ribonucleotide-RNA + H2O = a 3'-end 3'-phospho-ribonucleotide-RNA + a 5'-end dephospho-ribonucleoside-RNA + H(+). In terms of biological role, self-incompatibility (SI) is the inherited ability of a flowering plant to prevent self-fertilization by discriminating between self and non-self pollen during pollination. In many species of the Solanaceae, self-incompatibility is controlled by the single, multiallelic locus S. This stylar glycoprotein is associated with expression of self-incompatibility in potato. The sequence is that of Ribonuclease S-2 (S-2) from Nicotiana alata (Winged tobacco).